The sequence spans 196 residues: ATP-dependent Clp protease proteolytic subunit (196 aa).

Ser-101 serves as the catalytic Nucleophile. Residue His-126 is part of the active site.

The protein belongs to the peptidase S14 family. In terms of assembly, component of the chloroplastic Clp protease core complex.

The protein localises to the plastid. It is found in the chloroplast stroma. The enzyme catalyses Hydrolysis of proteins to small peptides in the presence of ATP and magnesium. alpha-casein is the usual test substrate. In the absence of ATP, only oligopeptides shorter than five residues are hydrolyzed (such as succinyl-Leu-Tyr-|-NHMec, and Leu-Tyr-Leu-|-Tyr-Trp, in which cleavage of the -Tyr-|-Leu- and -Tyr-|-Trp bonds also occurs).. In terms of biological role, cleaves peptides in various proteins in a process that requires ATP hydrolysis. Has a chymotrypsin-like activity. Plays a major role in the degradation of misfolded proteins. The sequence is that of ATP-dependent Clp protease proteolytic subunit from Pleurastrum terricola (Filamentous green alga).